The sequence spans 114 residues: T cell receptor beta variable 5-5 (114 aa).

An N-terminal signal peptide occupies residues 1–21 (MGPGLLCWVLLCLLGAGPVDA). Positions 22 to 114 (GVTQSPTHLI…SALYLCASSL (93 aa)) constitute an Ig-like domain. The cysteines at positions 42 and 110 are disulfide-linked. The N-linked (GlcNAc...) asparagine glycan is linked to Asn-90.

Alpha-beta TR is a heterodimer composed of an alpha and beta chain; disulfide-linked. The alpha-beta TR is associated with the transmembrane signaling CD3 coreceptor proteins to form the TR-CD3 (TcR or TCR). The assembly of alpha-beta TR heterodimers with CD3 occurs in the endoplasmic reticulum where a single alpha-beta TR heterodimer associates with one CD3D-CD3E heterodimer, one CD3G-CD3E heterodimer and one CD247 homodimer forming a stable octameric structure. CD3D-CD3E and CD3G-CD3E heterodimers preferentially associate with TR alpha and TR beta chains, respectively. The association of the CD247 homodimer is the last step of TcR assembly in the endoplasmic reticulum and is required for transport to the cell surface.

Its subcellular location is the cell membrane. V region of the variable domain of T cell receptor (TR) beta chain that participates in the antigen recognition. Alpha-beta T cell receptors are antigen specific receptors which are essential to the immune response and are present on the cell surface of T lymphocytes. Recognize peptide-major histocompatibility (MH) (pMH) complexes that are displayed by antigen presenting cells (APC), a prerequisite for efficient T cell adaptive immunity against pathogens. Binding of alpha-beta TR to pMH complex initiates TR-CD3 clustering on the cell surface and intracellular activation of LCK that phosphorylates the ITAM motifs of CD3G, CD3D, CD3E and CD247 enabling the recruitment of ZAP70. In turn ZAP70 phosphorylates LAT, which recruits numerous signaling molecules to form the LAT signalosome. The LAT signalosome propagates signal branching to three major signaling pathways, the calcium, the mitogen-activated protein kinase (MAPK) kinase and the nuclear factor NF-kappa-B (NF-kB) pathways, leading to the mobilization of transcription factors that are critical for gene expression and essential for T cell growth and differentiation. The T cell repertoire is generated in the thymus, by V-(D)-J rearrangement. This repertoire is then shaped by intrathymic selection events to generate a peripheral T cell pool of self-MH restricted, non-autoaggressive T cells. Post-thymic interaction of alpha-beta TR with the pMH complexes shapes TR structural and functional avidity. This is T cell receptor beta variable 5-5 from Homo sapiens (Human).